The primary structure comprises 31 residues: Cycloviolacin-O6 (31 aa).

The cyclopeptide (Gly-Asn) cross-link spans 1–31; it reads GTLPCGESCVWIPCISAAVGCSCKSKVCYKN. Disulfide bonds link cysteine 5–cysteine 21, cysteine 9–cysteine 23, and cysteine 14–cysteine 28.

Post-translationally, this is a cyclic peptide.

In terms of biological role, probably participates in a plant defense mechanism. This Viola odorata (Sweet violet) protein is Cycloviolacin-O6.